A 445-amino-acid polypeptide reads, in one-letter code: Phosphoglucosamine mutase (445 aa).

Ser-102 serves as the catalytic Phosphoserine intermediate. The Mg(2+) site is built by Ser-102, Asp-241, Asp-243, and Asp-245. Position 102 is a phosphoserine (Ser-102).

Belongs to the phosphohexose mutase family. Requires Mg(2+) as cofactor. Activated by phosphorylation.

The catalysed reaction is alpha-D-glucosamine 1-phosphate = D-glucosamine 6-phosphate. Catalyzes the conversion of glucosamine-6-phosphate to glucosamine-1-phosphate. This is Phosphoglucosamine mutase from Zymomonas mobilis subsp. mobilis (strain ATCC 31821 / ZM4 / CP4).